A 416-amino-acid chain; its full sequence is LL-diaminopimelate aminotransferase (416 aa).

Tyrosine 25 and glycine 52 together coordinate substrate. Pyridoxal 5'-phosphate-binding positions include tyrosine 78, 115–116 (SK), tyrosine 140, asparagine 190, tyrosine 221, and 248–250 (SFS). The substrate site is built by lysine 116, tyrosine 140, and asparagine 190. Lysine 251 bears the N6-(pyridoxal phosphate)lysine mark. Residue arginine 259 coordinates pyridoxal 5'-phosphate.

It belongs to the class-I pyridoxal-phosphate-dependent aminotransferase family. As to quaternary structure, homodimer. Pyridoxal 5'-phosphate is required as a cofactor.

Its subcellular location is the cytoplasm. It carries out the reaction (2S,6S)-2,6-diaminopimelate + 2-oxoglutarate = (S)-2,3,4,5-tetrahydrodipicolinate + L-glutamate + H2O + H(+). Its pathway is amino-acid biosynthesis; L-lysine biosynthesis via DAP pathway; LL-2,6-diaminopimelate from (S)-tetrahydrodipicolinate (aminotransferase route): step 1/1. In terms of biological role, involved in the synthesis of meso-diaminopimelate (m-DAP or DL-DAP), required for both lysine and peptidoglycan biosynthesis. Catalyzes the direct conversion of tetrahydrodipicolinate to LL-diaminopimelate. The polypeptide is LL-diaminopimelate aminotransferase (dapL) (Methanococcus maripaludis (strain DSM 14266 / JCM 13030 / NBRC 101832 / S2 / LL)).